Reading from the N-terminus, the 448-residue chain is Trigger factor (448 aa).

Positions 173 to 258 constitute a PPIase FKBP-type domain; sequence SDRVTIDFVG…LKQIEWAHMP (86 aa).

It belongs to the FKBP-type PPIase family. Tig subfamily.

It is found in the cytoplasm. It carries out the reaction [protein]-peptidylproline (omega=180) = [protein]-peptidylproline (omega=0). Involved in protein export. Acts as a chaperone by maintaining the newly synthesized protein in an open conformation. Functions as a peptidyl-prolyl cis-trans isomerase. The sequence is that of Trigger factor from Herminiimonas arsenicoxydans.